The sequence spans 80 residues: Large ribosomal subunit protein bL31B (80 aa).

This sequence belongs to the bacterial ribosomal protein bL31 family. Type B subfamily. As to quaternary structure, part of the 50S ribosomal subunit.

This is Large ribosomal subunit protein bL31B from Streptococcus thermophilus (strain CNRZ 1066).